The primary structure comprises 553 residues: Ribonuclease J 2 (553 aa).

Zn(2+)-binding residues include His-69, His-71, His-138, and Asp-160. 361-365 (RVSGH) is a substrate binding site.

This sequence belongs to the metallo-beta-lactamase superfamily. RNA-metabolizing metallo-beta-lactamase-like family. Bacterial RNase J subfamily. Homodimer, may be a subunit of the RNA degradosome. It depends on Zn(2+) as a cofactor.

The protein localises to the cytoplasm. Its function is as follows. An RNase that has 5'-3' exonuclease and possibly endonuclease activity. Involved in maturation of rRNA and in some organisms also mRNA maturation and/or decay. Has an overlapping but not completely redundant role with RNase J1 in the decay of mRNA. The polypeptide is Ribonuclease J 2 (Streptococcus pyogenes serotype M3 (strain ATCC BAA-595 / MGAS315)).